We begin with the raw amino-acid sequence, 562 residues long: Dihydroxy-acid dehydratase (562 aa).

A Mg(2+)-binding site is contributed by aspartate 80. Cysteine 121 lines the [2Fe-2S] cluster pocket. Mg(2+)-binding residues include aspartate 122 and lysine 123. An N6-carboxylysine modification is found at lysine 123. Cysteine 194 contacts [2Fe-2S] cluster. Position 446 (glutamate 446) interacts with Mg(2+). Serine 472 functions as the Proton acceptor in the catalytic mechanism.

The protein belongs to the IlvD/Edd family. As to quaternary structure, homodimer. The cofactor is [2Fe-2S] cluster. Requires Mg(2+) as cofactor.

It catalyses the reaction (2R)-2,3-dihydroxy-3-methylbutanoate = 3-methyl-2-oxobutanoate + H2O. The enzyme catalyses (2R,3R)-2,3-dihydroxy-3-methylpentanoate = (S)-3-methyl-2-oxopentanoate + H2O. Its pathway is amino-acid biosynthesis; L-isoleucine biosynthesis; L-isoleucine from 2-oxobutanoate: step 3/4. The protein operates within amino-acid biosynthesis; L-valine biosynthesis; L-valine from pyruvate: step 3/4. In terms of biological role, functions in the biosynthesis of branched-chain amino acids. Catalyzes the dehydration of (2R,3R)-2,3-dihydroxy-3-methylpentanoate (2,3-dihydroxy-3-methylvalerate) into 2-oxo-3-methylpentanoate (2-oxo-3-methylvalerate) and of (2R)-2,3-dihydroxy-3-methylbutanoate (2,3-dihydroxyisovalerate) into 2-oxo-3-methylbutanoate (2-oxoisovalerate), the penultimate precursor to L-isoleucine and L-valine, respectively. This chain is Dihydroxy-acid dehydratase, found in Staphylococcus aureus (strain MRSA252).